A 506-amino-acid polypeptide reads, in one-letter code: ATP synthase subunit alpha (506 aa).

Residue 170-177 participates in ATP binding; that stretch reads GDRQTGKT.

It belongs to the ATPase alpha/beta chains family. In terms of assembly, F-type ATPases have 2 components, CF(1) - the catalytic core - and CF(0) - the membrane proton channel. CF(1) has five subunits: alpha(3), beta(3), gamma(1), delta(1), epsilon(1). CF(0) has four main subunits: a(1), b(1), b'(1) and c(9-12).

The protein localises to the cellular thylakoid membrane. It carries out the reaction ATP + H2O + 4 H(+)(in) = ADP + phosphate + 5 H(+)(out). In terms of biological role, produces ATP from ADP in the presence of a proton gradient across the membrane. The alpha chain is a regulatory subunit. The sequence is that of ATP synthase subunit alpha from Synechococcus sp. (strain CC9902).